The primary structure comprises 440 residues: N-succinylarginine dihydrolase (440 aa).

Substrate is bound by residues 17–26 (GGLSPGNLAS), Asn108, and 135–136 (HR). Residues 17–37 (GGLSPGNLASQSHVGEPSHPR) form a disordered region. Glu172 is a catalytic residue. Arg210 is a substrate binding site. Residue His246 is part of the active site. Residues Asp248 and Asn358 each coordinate substrate. Cys364 functions as the Nucleophile in the catalytic mechanism.

This sequence belongs to the succinylarginine dihydrolase family. As to quaternary structure, homodimer.

The enzyme catalyses N(2)-succinyl-L-arginine + 2 H2O + 2 H(+) = N(2)-succinyl-L-ornithine + 2 NH4(+) + CO2. It participates in amino-acid degradation; L-arginine degradation via AST pathway; L-glutamate and succinate from L-arginine: step 2/5. Catalyzes the hydrolysis of N(2)-succinylarginine into N(2)-succinylornithine, ammonia and CO(2). The chain is N-succinylarginine dihydrolase from Myxococcus xanthus (strain DK1622).